Reading from the N-terminus, the 143-residue chain is Putative pre-16S rRNA nuclease (143 aa).

It belongs to the YqgF nuclease family.

The protein localises to the cytoplasm. Functionally, could be a nuclease involved in processing of the 5'-end of pre-16S rRNA. In Agathobacter rectalis (strain ATCC 33656 / DSM 3377 / JCM 17463 / KCTC 5835 / VPI 0990) (Eubacterium rectale), this protein is Putative pre-16S rRNA nuclease.